Here is a 192-residue protein sequence, read N- to C-terminus: Phosphoheptose isomerase (192 aa).

The SIS domain occupies 37 to 192 (IAASLRDGGK…IMLIEKELAV (156 aa)). 52–54 (NGG) serves as a coordination point for substrate. H61 and E65 together coordinate Zn(2+). Substrate-binding positions include E65, 93-94 (ND), 119-121 (STS), S124, and Q172. Residues Q172 and H180 each coordinate Zn(2+).

The protein belongs to the SIS family. GmhA subfamily. In terms of assembly, homotetramer. Zn(2+) is required as a cofactor.

The protein resides in the cytoplasm. The enzyme catalyses 2 D-sedoheptulose 7-phosphate = D-glycero-alpha-D-manno-heptose 7-phosphate + D-glycero-beta-D-manno-heptose 7-phosphate. Its pathway is carbohydrate biosynthesis; D-glycero-D-manno-heptose 7-phosphate biosynthesis; D-glycero-alpha-D-manno-heptose 7-phosphate and D-glycero-beta-D-manno-heptose 7-phosphate from sedoheptulose 7-phosphate: step 1/1. Catalyzes the isomerization of sedoheptulose 7-phosphate in D-glycero-D-manno-heptose 7-phosphate. This chain is Phosphoheptose isomerase, found in Tolumonas auensis (strain DSM 9187 / NBRC 110442 / TA 4).